A 397-amino-acid chain; its full sequence is Elongation factor Tu (397 aa).

The tr-type G domain maps to 10-207 (KPHCNIGTIG…AVDEWIPQPE (198 aa)). Residues 19–26 (GHVDHGKT) form a G1 region. GTP is bound at residue 19–26 (GHVDHGKT). Thr-26 is a binding site for Mg(2+). Residues 61-65 (GITIS) form a G2 region. A G3 region spans residues 82 to 85 (DCPG). Residues 82-86 (DCPGH) and 137-140 (NKVD) contribute to the GTP site. The tract at residues 137–140 (NKVD) is G4. The segment at 175–177 (SAL) is G5.

It belongs to the TRAFAC class translation factor GTPase superfamily. Classic translation factor GTPase family. EF-Tu/EF-1A subfamily. In terms of assembly, monomer.

Its subcellular location is the cytoplasm. The enzyme catalyses GTP + H2O = GDP + phosphate + H(+). In terms of biological role, GTP hydrolase that promotes the GTP-dependent binding of aminoacyl-tRNA to the A-site of ribosomes during protein biosynthesis. This is Elongation factor Tu from Sphingopyxis alaskensis (strain DSM 13593 / LMG 18877 / RB2256) (Sphingomonas alaskensis).